The sequence spans 488 residues: Cobyric acid synthase (488 aa).

A GATase cobBQ-type domain is found at 248–435 (VLKVVVPVLP…LHGLFESPAA (188 aa)). Cys-329 (nucleophile) is an active-site residue. His-427 is an active-site residue.

This sequence belongs to the CobB/CobQ family. CobQ subfamily.

The protein operates within cofactor biosynthesis; adenosylcobalamin biosynthesis. Functionally, catalyzes amidations at positions B, D, E, and G on adenosylcobyrinic A,C-diamide. NH(2) groups are provided by glutamine, and one molecule of ATP is hydrogenolyzed for each amidation. The sequence is that of Cobyric acid synthase from Pseudomonas fluorescens (strain Pf0-1).